The following is a 332-amino-acid chain: Ethylene-responsive transcription factor ERF119 (332 aa).

The interval 1–33 (MAERKKRSSIQTNKPNKKPMKKKPFQLNHLPGL) is disordered. Over residues 15–24 (PNKKPMKKKP) the composition is skewed to basic residues. The AP2/ERF DNA-binding region spans 130–187 (KPVGVRQRKWGKWAAEIRHPITKVRTWLGTYETLEQAADAYATKKLEFDALAAATSAA).

This sequence belongs to the AP2/ERF transcription factor family. ERF subfamily.

The protein resides in the nucleus. Functionally, probably acts as a transcriptional activator. Binds to the GCC-box pathogenesis-related promoter element. May be involved in the regulation of gene expression by stress factors and by components of stress signal transduction pathways. This is Ethylene-responsive transcription factor ERF119 (ERF119) from Arabidopsis thaliana (Mouse-ear cress).